The primary structure comprises 79 residues: MMKYFLVLCLVVLGVAAVQAAALEDEKFLNLAESLAMPEESRCKARRYGCTDKAECCSEKCAYPALTCAFNWSCEKVCA.

The first 20 residues, 1 to 20, serve as a signal peptide directing secretion; sequence MMKYFLVLCLVVLGVAAVQA. Cystine bridges form between Cys43/Cys57, Cys50/Cys61, Cys56/Cys78, and Cys68/Cys74. Asn71 carries an N-linked (GlcNAc...) asparagine glycan.

Belongs to the neurotoxin 13 (insecticidal toxin ABC) family. ICK-21 subfamily. In terms of tissue distribution, expressed by the venom gland.

Its subcellular location is the secreted. Its function is as follows. Ion channel inhibitor. The protein is Toxin ICK-20 of Trittame loki (Brush-footed trapdoor spider).